The primary structure comprises 238 residues: 2-C-methyl-D-erythritol 4-phosphate cytidylyltransferase (238 aa).

This sequence belongs to the IspD/TarI cytidylyltransferase family. IspD subfamily.

It catalyses the reaction 2-C-methyl-D-erythritol 4-phosphate + CTP + H(+) = 4-CDP-2-C-methyl-D-erythritol + diphosphate. It participates in isoprenoid biosynthesis; isopentenyl diphosphate biosynthesis via DXP pathway; isopentenyl diphosphate from 1-deoxy-D-xylulose 5-phosphate: step 2/6. Its function is as follows. Catalyzes the formation of 4-diphosphocytidyl-2-C-methyl-D-erythritol from CTP and 2-C-methyl-D-erythritol 4-phosphate (MEP). This Salinibacter ruber (strain DSM 13855 / M31) protein is 2-C-methyl-D-erythritol 4-phosphate cytidylyltransferase.